Consider the following 561-residue polypeptide: BTB/POZ domain-containing protein At2g46260 (561 aa).

Disordered regions lie at residues 1-31 and 100-119; these read MRGS…EGDF and LTDN…NLDD. A compositionally biased stretch (polar residues) spans 17-28; that stretch reads DSNFSRHGSSSE. A compositionally biased stretch (acidic residues) spans 107–119; the sequence is DMDDAPGGDNLDD. A BTB domain is found at 143 to 212; sequence IDCSTVVRVK…MYSNSLSVTT (70 aa). Residues 266 to 358 form the BACK domain; it reads QPLTDAAKQF…YMTCRKLKKV (93 aa).

Its pathway is protein modification; protein ubiquitination. In terms of biological role, may act as a substrate-specific adapter of an E3 ubiquitin-protein ligase complex (CUL3-RBX1-BTB) which mediates the ubiquitination and subsequent proteasomal degradation of target proteins. The sequence is that of BTB/POZ domain-containing protein At2g46260 from Arabidopsis thaliana (Mouse-ear cress).